The chain runs to 127 residues: Fumarate reductase subunit C (127 aa).

3 helical membrane passes run 30-50 (ATVL…GSLV), 67-87 (LVIA…QTFF), and 107-127 (IIVL…LIVV).

The protein belongs to the FrdC family. As to quaternary structure, part of an enzyme complex containing four subunits: a flavoprotein (FrdA), an iron-sulfur protein (FrdB), and two hydrophobic anchor proteins (FrdC and FrdD).

The protein localises to the cell inner membrane. Functionally, anchors the catalytic components of the fumarate reductase complex to the cell membrane, binds quinones. The polypeptide is Fumarate reductase subunit C (Vibrio cholerae serotype O1 (strain ATCC 39541 / Classical Ogawa 395 / O395)).